The chain runs to 264 residues: uncharacterized protein (264 aa).

A coiled-coil region spans residues 19–45; sequence AQEESMEQLKDINTKIDNSEKKISLEN.

This is an uncharacterized protein from Acanthamoeba polyphaga mimivirus (APMV).